Here is a 217-residue protein sequence, read N- to C-terminus: Eukaryotic translation initiation factor 4E (217 aa).

The tract at residues 1 to 30 (MATVEPETTPTPNPPTTEEEKTESNQEVAN) is disordered. A2 carries the post-translational modification N-acetylalanine. T22 is modified (phosphothreonine). The EIF4EBP1/2/3 binding stretch occupies residues 37–40 (HPLQ). 56–57 (WQ) lines the mRNA pocket. Residues 73–77 (WALYN) are EIF4EBP1/2/3 binding. 102-103 (WE) serves as a coordination point for mRNA. Positions 132–139 (ETLLCLIG) are EIF4EBP1/2/3 binding. Residues 157–162 (RAKGDK) and 205–207 (TKS) each bind mRNA. Phosphoserine; by PKC and MKNK2 is present on S209.

It belongs to the eukaryotic initiation factor 4E family. EIF4F is a multi-subunit complex, the composition of which varies with external and internal environmental conditions. It is composed of at least EIF4A, EIF4E and EIF4G1/EIF4G3. EIF4E is also known to interact with other partners. Interacts with EIF4ENIF1/4E-T; promotes recruitment to P-bodies and import into the nucleus. Hypophosphorylated EIF4EBP1, EIF4EBP2 and EIF4EBP3 compete with EIF4G1/EIF4G3 to interact with EIF4E; insulin stimulated MAP-kinase (MAPK1 and MAPK3) phosphorylation of EIF4EBP1 causes dissociation of the complex allowing EIF4G1/EIF4G3 to bind and consequent initiation of translation. Interacts mutually exclusive with EIF4A1 or EIF4A2. Interacts with NGDN and PIWIL2. Component of the CYFIP1-EIF4E-FMR1 complex composed of CYFIP, EIF4E and FMR1. Interacts directly with CYFIP1. Interacts with CLOCK. Binds to MKNK2 in nucleus. Interacts with LIMD1, WTIP and AJUBA. Interacts with APOBEC3G in an RNA-dependent manner. Interacts with LARP1. Interacts with METTL3. Interacts with RBM24; this interaction prevents EIF4E from binding to p53/TP53 mRNA and inhibits the assembly of translation initiation complex. Interacts with DDX3X; interaction is direct and in an RNA-independent manner; this interaction enhances EIF4E cap-binding ability and is required for the repression of cap-dependent translation and the increase of IRES-mediated translation. DDX3X competes with EIF4G1 for interaction with EIF4E. Interacts with EIF4G1; which in a mutual exclusive interaction associates either with EIF1 or with EIF4E on a common binding site. Interacts with BTG4 and CNOT7. Interacts with LRPPRC (via N-terminus); the interaction promotes association of EIF4E with 4ESE-containing mRNAs. Interacts with mRNA cleavage enzyme CPSF3 and its cofactor CPSF1. Interacts (via RING-type zinc finger) with PML; the interaction results in conformational changes of both interacting proteins and reduces EIF4E affinity for the 5' m7G cap of mRNA, thus reducing EIF4E-mediated mRNA nuclear export. Interacts with homeobox protein HHEX/PRH; the interaction inhibits EIF4E-mediated mRNA nuclear export. Interacts with homeobox protein HOXA9; the interaction positively regulates EIF4E-mediated mRNA nuclear export. Interacts with homeobox protein EMX2. As to quaternary structure, (Microbial infection) Interacts with Lassa virus Z protein. In terms of assembly, (Microbial infection) Interacts with Lymphocytic choriomeningitis virus (LCMV) Z protein (via RING-type zinc finger); the interaction results in conformational changes of both interacting proteins and reduces EIF4E affinity for the m7G mRNA cap structure. (Microbial infection) Interacts (via cap-binding region) with potato virus Y VPg; this interaction mediates the translation of the VPg-viral RNA conjugates and interferes with the cellular EIF4E-dependent mRNA export and translation. Phosphorylation increases the ability of the protein to bind to mRNA caps and to form the eIF4F complex. Phosphorylation also enhances its mRNA transport function. Phosphorylation at Ser-209 is not essential for protein synthesis.

The protein resides in the cytoplasm. It is found in the P-body. It localises to the stress granule. Its subcellular location is the nucleus. The protein localises to the nucleus speckle. The protein resides in the nuclear body. In terms of biological role, acts in the cytoplasm to initiate and regulate protein synthesis and is required in the nucleus for export of a subset of mRNAs from the nucleus to the cytoplasm which promotes processes such as RNA capping, processing and splicing. Component of the protein complex eIF4F, which is involved in the recognition of the mRNA cap, ATP-dependent unwinding of 5'-terminal secondary structure and recruitment of mRNA to the ribosome. This protein recognizes and binds the 7-methylguanosine (m7G)-containing mRNA cap during an early step in the initiation of protein synthesis and facilitates ribosome binding by inducing the unwinding of the mRNAs secondary structures. Together with EIF4G1, antagonizes the scanning promoted by EIF1-EIF4G1 and is required for TISU translation, a process where the TISU element recognition makes scanning unnecessary. In addition to its role in translation initiation, also acts as a regulator of translation and stability in the cytoplasm. Component of the CYFIP1-EIF4E-FMR1 complex which binds to the mRNA cap and mediates translational repression: in the complex, EIF4E mediates the binding to the mRNA cap. Component of a multiprotein complex that sequesters and represses translation of proneurogenic factors during neurogenesis. In P-bodies, component of a complex that mediates the storage of translationally inactive mRNAs in the cytoplasm and prevents their degradation. May play an important role in spermatogenesis through translational regulation of stage-specific mRNAs during germ cell development. As well as its roles in translation, also involved in mRNA nucleocytoplasmic transport. Its role in mRNA export from the nucleus to the cytoplasm relies on its ability to bind the m7G cap of RNAs and on the presence of the 50-nucleotide EIF4E sensitivity element (4ESE) in the 3'UTR of sensitive transcripts. Interaction with the 4ESE is mediated by LRPPRC which binds simultaneously to both EIF4E and the 4ESE, thereby acting as a platform for assembly for the RNA export complex. EIF4E-dependent mRNA export is independent of ongoing protein or RNA synthesis and is also NFX1-independent but is XPO1-dependent with LRPPRC interacting with XPO1 to form an EIF4E-dependent mRNA export complex. Alters the composition of the cytoplasmic face of the nuclear pore to promote RNA export by reducing RANBP2 expression, relocalizing nucleoporin NUP214 and increasing expression of RANBP1 and RNA export factors DDX19 and GLE1. Promotes the nuclear export of cyclin CCND1 mRNA. Promotes the nuclear export of NOS2/iNOS mRNA. Promotes the nuclear export of MDM2 mRNA. Promotes the export of additional mRNAs, including others involved in the cell cycle. In the nucleus, binds to capped splice factor-encoding mRNAs and stimulates their nuclear export to enhance splice factor production by increasing their cytoplasmic availability to the translation machinery. May also regulate splicing through interaction with the spliceosome in an RNA and m7G cap-dependent manner. Also binds to some pre-mRNAs and may play a role in their recruitment to the spliceosome. Promotes steady-state capping of a subset of coding and non-coding RNAs by mediating nuclear export of capping machinery mRNAs including RNMT, RNGTT and RAMAC to enhance their translation. Stimulates mRNA 3'-end processing by promoting the expression of several core cleavage complex factors required for mRNA cleavage and polyadenylation, and may also have a direct effect through its interaction with the CPSF3 cleavage enzyme. Rescues cells from apoptosis by promoting activation of serine/threonine-protein kinase AKT1 through mRNA export of NBS1 which potentiates AKT1 phosphorylation and also through mRNA export of AKT1 effectors, allowing for increased production of these proteins. This Homo sapiens (Human) protein is Eukaryotic translation initiation factor 4E.